The chain runs to 247 residues: Probable transcriptional regulatory protein LPC_0711 (247 aa).

The protein belongs to the TACO1 family.

It is found in the cytoplasm. This chain is Probable transcriptional regulatory protein LPC_0711, found in Legionella pneumophila (strain Corby).